The primary structure comprises 868 residues: V-set and immunoglobulin domain-containing protein 10-like (868 aa).

Positions 1–27 (MGLSWALLPFLLLAFRAELLALQPALG) are cleaved as a signal peptide. A compositionally biased stretch (low complexity) spans 26–52 (LGSQPPSASSSHSMGSSRDFVSNVSSS). Residues 26-82 (LGSQPPSASSSHSMGSSRDFVSNVSSSQHPQPPGSEASAGIPDSNRFPQGLNSSHVP) are disordered. The Extracellular portion of the chain corresponds to 28-763 (SQPPSASSSH…QAGSDLSPGA (736 aa)). 3 N-linked (GlcNAc...) asparagine glycosylation sites follow: asparagine 48, asparagine 77, and asparagine 88. The segment covering 71-80 (RFPQGLNSSH) has biased composition (polar residues). Disordered stretches follow at residues 96 to 154 (LSPD…SGSK) and 323 to 342 (WSRDGRALGTSDPEGAEPPR). Composition is skewed to polar residues over residues 99–108 (DVTSSETPPS) and 133–143 (PASQISVQTPD). Ig-like C2-type domains are found at residues 289 to 381 (PQLS…ADVS) and 389 to 474 (PVIR…SVFN). Cysteine 311 and cysteine 365 form a disulfide bridge. Asparagine 410 carries N-linked (GlcNAc...) asparagine glycosylation. An intrachain disulfide couples cysteine 415 to cysteine 458. 3 N-linked (GlcNAc...) asparagine glycosylation sites follow: asparagine 474, asparagine 628, and asparagine 637. A helical transmembrane segment spans residues 764–784 (IAGIVLGSLLGLALLAGLLIL). Over 785-868 (CICCLRRYPG…PWTVRAATQV (84 aa)) the chain is Cytoplasmic.

The protein localises to the membrane. The chain is V-set and immunoglobulin domain-containing protein 10-like (Vsig10l) from Mus musculus (Mouse).